Consider the following 565-residue polypeptide: Ubiquitin carboxyl-terminal hydrolase 21 (565 aa).

Positions 1–14 (MPQASEHRLGRTRE) are enriched in basic and acidic residues. The disordered stretch occupies residues 1–103 (MPQASEHRLG…PPPTVALPLP (103 aa)). The span at 48-57 (MLRPLPPRPG) shows a compositional bias: pro residues. The segment covering 58–70 (LPDERLKKLELGR) has biased composition (basic and acidic residues). Positions 134 to 152 (ELGAALSRLALRPEPPTLR) match the Nuclear export signal motif. Residues 212–558 (VGLRNLGNTC…EGYVLFYQLM (347 aa)) enclose the USP domain. Catalysis depends on C221, which acts as the Nucleophile. C384, C387, C437, and C440 together coordinate Zn(2+). H518 serves as the catalytic Proton acceptor.

Belongs to the peptidase C19 family. USP21 subfamily. Interacts with BEND3. In terms of tissue distribution, highly expressed in heart, pancreas and skeletal muscle. Also expressed in brain, placenta, liver and kidney, and at very low level in lung.

It localises to the cytoplasm. Its subcellular location is the nucleus. It catalyses the reaction Thiol-dependent hydrolysis of ester, thioester, amide, peptide and isopeptide bonds formed by the C-terminal Gly of ubiquitin (a 76-residue protein attached to proteins as an intracellular targeting signal).. Its function is as follows. Deubiquitinates histone H2A, a specific tag for epigenetic transcriptional repression, thereby acting as a coactivator. Deubiquitination of histone H2A releaves the repression of di- and trimethylation of histone H3 at 'Lys-4', resulting in regulation of transcriptional initiation. Regulates gene expression via histone H2A deubiquitination. Deubiquitinates BAZ2A/TIP5 leading to its stabilization. Also capable of removing NEDD8 from NEDD8 conjugates but has no effect on Sentrin-1 conjugates. Also acts as a negative regulator of the ribosome quality control (RQC) by mediating deubiquitination of 40S ribosomal proteins RPS10/eS10 and RPS20/uS10, thereby antagonizing ZNF598-mediated 40S ubiquitination. This is Ubiquitin carboxyl-terminal hydrolase 21 from Homo sapiens (Human).